The chain runs to 239 residues: EF-hand domain-containing protein D2 (239 aa).

Positions 1–51 are disordered; the sequence is MATDELASKLSRRLQMEDEGGEATEQPGLNGAAAAAAEAPDETAQALGSAD. Position 2 is an N-acetylalanine (alanine 2). The residue at position 11 (serine 11) is a Phosphoserine. The segment covering 32–46 has biased composition (low complexity); that stretch reads AAAAAAEAPDETAQA. Phosphoserine is present on residues serine 73 and serine 75. Tyrosine 82 carries the post-translational modification Phosphotyrosine. 2 EF-hand domains span residues 91–126 and 127–162; these read KQIKDMEKMFKQYDAGKDGFIDLMELKLMMEKLGAP and QTHLGLKSMIQEVDEDFDSKLSFREFLLIFRKAAAG. Ca(2+) is bound by residues aspartate 104, aspartate 108, glutamate 115, aspartate 140, aspartate 142, aspartate 144, lysine 146, and glutamate 151. An N6-acetyllysine modification is found at lysine 232.

Interacts with CASP9; with inactive form.

The protein resides in the membrane raft. Functionally, may regulate B-cell receptor (BCR)-induced immature and primary B-cell apoptosis. Plays a role as negative regulator of the canonical NF-kappa-B-activating branch. Controls spontaneous apoptosis through the regulation of BCL2L1 abundance. This is EF-hand domain-containing protein D2 (Efhd2) from Rattus norvegicus (Rat).